The sequence spans 185 residues: Ribosome-recycling factor (185 aa).

This sequence belongs to the RRF family.

It is found in the cytoplasm. Functionally, responsible for the release of ribosomes from messenger RNA at the termination of protein biosynthesis. May increase the efficiency of translation by recycling ribosomes from one round of translation to another. This chain is Ribosome-recycling factor, found in Mycobacterium avium (strain 104).